We begin with the raw amino-acid sequence, 592 residues long: A-type ATP synthase subunit A (592 aa).

Residue 233–240 (GPFGSGKT) coordinates ATP.

The protein belongs to the ATPase alpha/beta chains family. Has multiple subunits with at least A(3), B(3), C, D, E, F, H, I and proteolipid K(x).

It is found in the cell membrane. The catalysed reaction is ATP + H2O + 4 H(+)(in) = ADP + phosphate + 5 H(+)(out). Component of the A-type ATP synthase that produces ATP from ADP in the presence of a proton gradient across the membrane. The A chain is the catalytic subunit. The polypeptide is A-type ATP synthase subunit A (Saccharolobus islandicus (strain Y.N.15.51 / Yellowstone #2) (Sulfolobus islandicus)).